Reading from the N-terminus, the 395-residue chain is Univin (395 aa).

The N-terminal stretch at 1-19 (MDVSKVLILTLIWLLTADS) is a signal peptide. The propeptide occupies 20 to 272 (APPDYVTLTR…CSKRNRRNKR (253 aa)). The N-linked (GlcNAc...) asparagine glycan is linked to asparagine 50. Residues 69 to 97 (EGAAASRGGETEIGKEEEEDGRPCSETKL) are disordered. 2 N-linked (GlcNAc...) asparagine glycosylation sites follow: asparagine 116 and asparagine 336. Disulfide bonds link cysteine 294-cysteine 360, cysteine 323-cysteine 392, and cysteine 327-cysteine 394.

The protein belongs to the TGF-beta family. As to quaternary structure, homodimer; disulfide-linked.

The protein resides in the secreted. Could have a critical role in early developmental decisions in the sea urchin embryo. The protein is Univin of Strongylocentrotus purpuratus (Purple sea urchin).